Consider the following 319-residue polypeptide: Thioredoxin reductase (319 aa).

Residue 37–44 coordinates FAD; the sequence is ERGVPGGQ. An intrachain disulfide couples C136 to C139. 279–288 is an FAD binding site; the sequence is DVRAKSLRQI.

Belongs to the class-II pyridine nucleotide-disulfide oxidoreductase family. As to quaternary structure, homodimer. Requires FAD as cofactor.

The protein localises to the cytoplasm. It carries out the reaction [thioredoxin]-dithiol + NADP(+) = [thioredoxin]-disulfide + NADPH + H(+). In Listeria innocua serovar 6a (strain ATCC BAA-680 / CLIP 11262), this protein is Thioredoxin reductase (trxB).